The chain runs to 126 residues: Aspartate 1-decarboxylase (126 aa).

Catalysis depends on S25, which acts as the Schiff-base intermediate with substrate; via pyruvic acid. S25 is subject to Pyruvic acid (Ser). Residue T57 coordinates substrate. Catalysis depends on Y58, which acts as the Proton donor. Substrate is bound at residue 73–75 (GAA).

This sequence belongs to the PanD family. Heterooctamer of four alpha and four beta subunits. It depends on pyruvate as a cofactor. Post-translationally, is synthesized initially as an inactive proenzyme, which is activated by self-cleavage at a specific serine bond to produce a beta-subunit with a hydroxyl group at its C-terminus and an alpha-subunit with a pyruvoyl group at its N-terminus.

Its subcellular location is the cytoplasm. It carries out the reaction L-aspartate + H(+) = beta-alanine + CO2. It participates in cofactor biosynthesis; (R)-pantothenate biosynthesis; beta-alanine from L-aspartate: step 1/1. Its function is as follows. Catalyzes the pyruvoyl-dependent decarboxylation of aspartate to produce beta-alanine. This is Aspartate 1-decarboxylase from Nitrosococcus oceani (strain ATCC 19707 / BCRC 17464 / JCM 30415 / NCIMB 11848 / C-107).